The primary structure comprises 187 residues: COMM domain-containing protein 1 (187 aa).

In terms of domain architecture, COMM spans serine 112–serine 186.

The protein belongs to the COMM domain-containing protein 1 family. Component of the commander complex consisting of the CCC subcomplex and the retriever subcomplex.

Scaffold protein in the commander complex that is essential for endosomal recycling of transmembrane cargos; the commander complex is composed of the CCC subcomplex and the retriever subcomplex. In Dictyostelium discoideum (Social amoeba), this protein is COMM domain-containing protein 1 (commd1).